The sequence spans 652 residues: Acetyl-coenzyme A synthetase (652 aa).

Residues 191 to 194 (RAGR), T311, and N335 each bind CoA. ATP is bound by residues 387 to 389 (GEP), 411 to 416 (DTWWQT), D500, and R515. A CoA-binding site is contributed by S523. R526 contributes to the ATP binding site. V537, H539, and I542 together coordinate Mg(2+). R584 is a binding site for CoA. K609 is subject to N6-acetyllysine; by Pat.

The protein belongs to the ATP-dependent AMP-binding enzyme family. Monomer. The cofactor is Mg(2+). Acetylated. Deacetylation by the SIR2-homolog deacetylase activates the enzyme.

The enzyme catalyses acetate + ATP + CoA = acetyl-CoA + AMP + diphosphate. Its function is as follows. Catalyzes the conversion of acetate into acetyl-CoA (AcCoA), an essential intermediate at the junction of anabolic and catabolic pathways. Acs undergoes a two-step reaction. In the first half reaction, Acs combines acetate with ATP to form acetyl-adenylate (AcAMP) intermediate. In the second half reaction, it can then transfer the acetyl group from AcAMP to the sulfhydryl group of CoA, forming the product AcCoA. Required for acetate recapture but not for acetate excretion when this organism is grown on ethanolamine. Enables the cell to use acetate during aerobic growth to generate energy via the TCA cycle, and biosynthetic compounds via the glyoxylate shunt. Acetylates CheY, the response regulator involved in flagellar movement and chemotaxis. The chain is Acetyl-coenzyme A synthetase from Salmonella typhimurium (strain LT2 / SGSC1412 / ATCC 700720).